Here is a 378-residue protein sequence, read N- to C-terminus: MLPPQPSAAHQGRGGRSGLLPKGPAMLCRLCWLVSYSLAVLLLGCLLFLRKAAKPAGDPTAHQPFWAPPTPRHSRCPPNHTVSSASLSLPSRHRLFLTYRHCRNFSILLEPSGCSKDTFLLLAIKSQPGHVERRAAIRSTWGRVGGWARGRQLKLVFLLGVAGSAPPAQLLAYESREFDDILQWDFTEDFFNLTLKELHLQRWVVAACPQAHFMLKGDDDVFVHVPNVLEFLDGWDPAQDLLVGDVIRQALPNRNTKVKYFIPPSMYRATHYPPYAGGGGYVMSRATVRRLQAIMEDAELFPIDDVFVGMCLRRLGLSPMHHAGFKTFGIRRPLDPLDPCLYRGLLLVHRLSPLEMWTMWALVTDEGLKCAAGPIPQR.

Over 1 to 28 (MLPPQPSAAHQGRGGRSGLLPKGPAMLC) the chain is Cytoplasmic. The helical; Signal-anchor for type II membrane protein transmembrane segment at 29–49 (RLCWLVSYSLAVLLLGCLLFL) threads the bilayer. The Lumenal segment spans residues 50–378 (RKAAKPAGDP…KCAAGPIPQR (329 aa)). The segment at 59-81 (PTAHQPFWAPPTPRHSRCPPNHT) is disordered. Asparagine 192 is a glycosylation site (N-linked (GlcNAc...) asparagine).

It belongs to the glycosyltransferase 31 family. As to expression, mainly expressed in brain tissues such as whole brain, hippocampus, amygdala, cerebellum and caudate nucleus. Also expressed in colon, esophagus and kidney.

The protein localises to the golgi apparatus membrane. It carries out the reaction a beta-D-galactosyl-(1-&gt;4)-N-acetyl-beta-D-glucosaminyl derivative + UDP-N-acetyl-alpha-D-glucosamine = an N-acetyl-beta-D-glucosaminyl-(1-&gt;3)-beta-D-galactosyl-(1-&gt;4)-N-acetyl-beta-D-glucosaminyl derivative + UDP + H(+). The protein operates within protein modification; protein glycosylation. Beta-1,3-N-acetylglucosaminyltransferase involved in the synthesis of poly-N-acetyllactosamine. Has activity for type 2 oligosaccharides. This Homo sapiens (Human) protein is N-acetyllactosaminide beta-1,3-N-acetylglucosaminyltransferase 4 (B3GNT4).